The sequence spans 307 residues: Acetyl-coenzyme A carboxylase carboxyl transferase subunit beta (307 aa).

A CoA carboxyltransferase N-terminal domain is found at 28–297 (LWVKCPDTGQ…TPEPGTAPEP (270 aa)). The tract at residues 286 to 307 (RRTPEPGTAPEPTTPEPLPNAA) is disordered. Pro residues predominate over residues 292 to 307 (GTAPEPTTPEPLPNAA).

It belongs to the AccD/PCCB family. Acetyl-CoA carboxylase is a heterohexamer composed of biotin carboxyl carrier protein (AccB), biotin carboxylase (AccC) and two subunits each of ACCase subunit alpha (AccA) and ACCase subunit beta (AccD).

Its subcellular location is the cytoplasm. It catalyses the reaction N(6)-carboxybiotinyl-L-lysyl-[protein] + acetyl-CoA = N(6)-biotinyl-L-lysyl-[protein] + malonyl-CoA. The protein operates within lipid metabolism; malonyl-CoA biosynthesis; malonyl-CoA from acetyl-CoA: step 1/1. Functionally, component of the acetyl coenzyme A carboxylase (ACC) complex. Biotin carboxylase (BC) catalyzes the carboxylation of biotin on its carrier protein (BCCP) and then the CO(2) group is transferred by the transcarboxylase to acetyl-CoA to form malonyl-CoA. The sequence is that of Acetyl-coenzyme A carboxylase carboxyl transferase subunit beta from Methylorubrum extorquens (strain ATCC 14718 / DSM 1338 / JCM 2805 / NCIMB 9133 / AM1) (Methylobacterium extorquens).